Reading from the N-terminus, the 454-residue chain is CBL-interacting protein kinase 17 (454 aa).

In terms of domain architecture, Protein kinase spans 13–268; the sequence is YEMGRTLGEG…MAGIKSHEWF (256 aa). ATP-binding positions include 19–27 and lysine 42; that span reads LGEGNFGKV. Catalysis depends on aspartate 136, which acts as the Proton acceptor. Positions 154 to 183 are activation loop; the sequence is DFGLSALPQHLGNDGLLHTTCGSPNYIAPE. The region spanning 304–328 is the NAF domain; that stretch reads KNSHQINAFQLIGMASSLDLSGFFE. Residues 334–363 form a PPI region; the sequence is QRRIRFTSTHPPKDAFDKIESSATELGFQV.

Belongs to the protein kinase superfamily. CAMK Ser/Thr protein kinase family. SNF1 subfamily. Mn(2+) serves as cofactor.

The enzyme catalyses L-seryl-[protein] + ATP = O-phospho-L-seryl-[protein] + ADP + H(+). The catalysed reaction is L-threonyl-[protein] + ATP = O-phospho-L-threonyl-[protein] + ADP + H(+). CIPK serine-threonine protein kinases interact with CBL proteins. Binding of a CBL protein to the regulatory NAF domain of CIPK protein lead to the activation of the kinase in a calcium-dependent manner. This Oryza sativa subsp. japonica (Rice) protein is CBL-interacting protein kinase 17 (CIPK17).